The chain runs to 75 residues: Putative antitoxin VapB17 (75 aa).

Putative antitoxin component of a possible type II toxin-antitoxin (TA) system. The cognate toxin is VapC17. The polypeptide is Putative antitoxin VapB17 (vapB17) (Mycobacterium tuberculosis (strain CDC 1551 / Oshkosh)).